The following is a 165-amino-acid chain: Protein SprT (165 aa).

In terms of domain architecture, SprT-like spans 22-163; the sequence is LAQANLKLDR…RCVHCGEPLV (142 aa). Residue His78 participates in Zn(2+) binding. Glu79 is an active-site residue. A Zn(2+)-binding site is contributed by His82.

It belongs to the SprT family. Requires Zn(2+) as cofactor.

It localises to the cytoplasm. This chain is Protein SprT, found in Salmonella paratyphi A (strain ATCC 9150 / SARB42).